A 311-amino-acid chain; its full sequence is tRNA(Ile)-lysidine synthase (311 aa).

Residue 32 to 37 participates in ATP binding; it reads SGGPDS.

The protein belongs to the tRNA(Ile)-lysidine synthase family.

The protein resides in the cytoplasm. It catalyses the reaction cytidine(34) in tRNA(Ile2) + L-lysine + ATP = lysidine(34) in tRNA(Ile2) + AMP + diphosphate + H(+). Functionally, ligates lysine onto the cytidine present at position 34 of the AUA codon-specific tRNA(Ile) that contains the anticodon CAU, in an ATP-dependent manner. Cytidine is converted to lysidine, thus changing the amino acid specificity of the tRNA from methionine to isoleucine. The chain is tRNA(Ile)-lysidine synthase from Cutibacterium acnes (strain DSM 16379 / KPA171202) (Propionibacterium acnes).